We begin with the raw amino-acid sequence, 287 residues long: ATP synthase subunit a (287 aa).

Transmembrane regions (helical) follow at residues 37-57, 96-116, 149-169, 187-207, 224-244, and 266-286; these read LDSVAVSVILGVLGLFVMWLA, FIAPLALTVFVWIFLMNAMDL, LGLSSAVLILCFVYSIKIKGL, PVFALILGVVNLLMQIIEYVA, ELVFMLIALMGGAAAMSLSGV, and TLQAFIFMMLTLIYLGQAHEA.

Belongs to the ATPase A chain family. As to quaternary structure, F-type ATPases have 2 components, CF(1) - the catalytic core - and CF(0) - the membrane proton channel. CF(1) has five subunits: alpha(3), beta(3), gamma(1), delta(1), epsilon(1). CF(0) has three main subunits: a(1), b(2) and c(9-12). The alpha and beta chains form an alternating ring which encloses part of the gamma chain. CF(1) is attached to CF(0) by a central stalk formed by the gamma and epsilon chains, while a peripheral stalk is formed by the delta and b chains.

It localises to the cell inner membrane. Functionally, key component of the proton channel; it plays a direct role in the translocation of protons across the membrane. This is ATP synthase subunit a from Acidovorax sp. (strain JS42).